Reading from the N-terminus, the 224-residue chain is MISWLKGEKVHTWKISSRKGVVLNVGGVGYEIQLLPKQIDKAEVLNEFELWIHQIDREDGTSLYGFIEVNQRDLFREIISVNGIGPQIGMAMLEEFEVPQLVNAIENKESNLLTKTQGIGKRIAERLIVELRNKLQRFTDNDKTIHENKNDIEANQFSKYIDEIYLILNSLGYVDNEIKESIKIITINEKENSLLLNSSSAEEKADLMDKHLKEILMKLSEKST.

Residues 1 to 67 form a domain I region; sequence MISWLKGEKV…EDGTSLYGFI (67 aa). The interval 68–146 is domain II; sequence EVNQRDLFRE…RFTDNDKTIH (79 aa). The tract at residues 147–157 is flexible linker; it reads ENKNDIEANQF. Residues 157 to 224 are domain III; sequence FSKYIDEIYL…ILMKLSEKST (68 aa).

The protein belongs to the RuvA family. Homotetramer. Forms an RuvA(8)-RuvB(12)-Holliday junction (HJ) complex. HJ DNA is sandwiched between 2 RuvA tetramers; dsDNA enters through RuvA and exits via RuvB. An RuvB hexamer assembles on each DNA strand where it exits the tetramer. Each RuvB hexamer is contacted by two RuvA subunits (via domain III) on 2 adjacent RuvB subunits; this complex drives branch migration. In the full resolvosome a probable DNA-RuvA(4)-RuvB(12)-RuvC(2) complex forms which resolves the HJ.

The protein resides in the cytoplasm. Its function is as follows. The RuvA-RuvB-RuvC complex processes Holliday junction (HJ) DNA during genetic recombination and DNA repair, while the RuvA-RuvB complex plays an important role in the rescue of blocked DNA replication forks via replication fork reversal (RFR). RuvA specifically binds to HJ cruciform DNA, conferring on it an open structure. The RuvB hexamer acts as an ATP-dependent pump, pulling dsDNA into and through the RuvAB complex. HJ branch migration allows RuvC to scan DNA until it finds its consensus sequence, where it cleaves and resolves the cruciform DNA. This Prochlorococcus marinus (strain NATL2A) protein is Holliday junction branch migration complex subunit RuvA.